The sequence spans 592 residues: Aspartate--tRNA ligase (592 aa).

Glutamate 171 contributes to the L-aspartate binding site. An aspartate region spans residues 195-198 (QLFK). Arginine 217 contacts L-aspartate. ATP contacts are provided by residues 217–219 (RDE) and glutamine 226. Histidine 448 lines the L-aspartate pocket. Residue glutamate 482 participates in ATP binding. Arginine 489 contacts L-aspartate. 534 to 537 (GLDR) is a binding site for ATP.

The protein belongs to the class-II aminoacyl-tRNA synthetase family. Type 1 subfamily. Homodimer.

Its subcellular location is the cytoplasm. It carries out the reaction tRNA(Asp) + L-aspartate + ATP = L-aspartyl-tRNA(Asp) + AMP + diphosphate. Catalyzes the attachment of L-aspartate to tRNA(Asp) in a two-step reaction: L-aspartate is first activated by ATP to form Asp-AMP and then transferred to the acceptor end of tRNA(Asp). This is Aspartate--tRNA ligase from Vibrio campbellii (strain ATCC BAA-1116).